The primary structure comprises 189 residues: UPF0301 protein A1E_00140 (189 aa).

It belongs to the UPF0301 (AlgH) family.

The protein is UPF0301 protein A1E_00140 of Rickettsia canadensis (strain McKiel).